The chain runs to 87 residues: Small ribosomal subunit protein uS17 (87 aa).

This sequence belongs to the universal ribosomal protein uS17 family. Part of the 30S ribosomal subunit.

Its function is as follows. One of the primary rRNA binding proteins, it binds specifically to the 5'-end of 16S ribosomal RNA. This Neisseria gonorrhoeae (strain ATCC 700825 / FA 1090) protein is Small ribosomal subunit protein uS17.